A 290-amino-acid chain; its full sequence is Type II secretion system protein C (290 aa).

At 1–28 the chain is on the cytoplasmic side; the sequence is MTLPFRNDLLSSLLARCKTVPLSRFSQP. A helical transmembrane segment spans residues 29–46; sequence LFWLLLLLLAHQCAGLTW. Over 47–290 the chain is Periplasmic; sequence RLLDLGSQQA…LYDVYVGLSE (244 aa).

It belongs to the GSP C family.

The protein resides in the cell inner membrane. Its function is as follows. Involved in a type II secretion system (T2SS, formerly general secretion pathway, GSP) for the export of proteins. The chain is Type II secretion system protein C (exeC) from Aeromonas hydrophila.